The following is a 71-amino-acid chain: Ceratotoxin-A (71 aa).

The first 23 residues, 1–23 (MANLKAVFLICIVAFIAFQCVVA), serve as a signal peptide directing secretion. 2 consecutive propeptides follow at residues 24–35 (EPAAEDSIVVKR) and 65–71 (VAAGLVG).

Homomer of four to six subunits.

Its subcellular location is the secreted. Its function is as follows. Female-specific peptides with potent activity against Gram-positive and Gram-negative bacteria. They have as well hemolytic activity. In Ceratitis capitata (Mediterranean fruit fly), this protein is Ceratotoxin-A (CTXA2).